The following is a 119-amino-acid chain: U9-hexatoxin-Hi1 (119 aa).

A signal peptide spans 1 to 17; the sequence is MKLYLVILVTSVALAAA. A propeptide spanning residues 18-53 is cleaved from the precursor; that stretch reads SPTRTKEEPIEDELLEALLSVEKSLFNEETTVMEKR. 4 disulfides stabilise this stretch: C55–C73, C66–C79, C70–C117, and C72–C88.

This sequence belongs to the neurotoxin 03 (Tx2) family. 03 subfamily. Expressed by the venom gland.

Its subcellular location is the secreted. In terms of biological role, probable ion channel inhibitor. This Hadronyche infensa (Fraser island funnel-web spider) protein is U9-hexatoxin-Hi1.